Consider the following 71-residue polypeptide: DNA-directed RNA polymerase subunit epsilon (71 aa).

Belongs to the RNA polymerase subunit epsilon family. RNAP is composed of a core of 2 alpha, a beta and a beta' subunit. The core is associated with a delta subunit, and at least one of epsilon or omega. When a sigma factor is associated with the core the holoenzyme is formed, which can initiate transcription.

It carries out the reaction RNA(n) + a ribonucleoside 5'-triphosphate = RNA(n+1) + diphosphate. A non-essential component of RNA polymerase (RNAP). The polypeptide is DNA-directed RNA polymerase subunit epsilon (Staphylococcus carnosus (strain TM300)).